The primary structure comprises 178 residues: Bryoporin (178 aa).

Serine 51, valine 83, serine 102, proline 104, and tyrosine 134 together coordinate phosphocholine. The interval 101–117 (WSVPFDYNLYSNWWNIA) is trp-rich region.

The protein belongs to the actinoporin family. Plant subfamily.

With respect to regulation, inhibited by sphingomyelin. Its function is as follows. Actinoporin-related protein having hemolytic activity in vitro. Binds probably a phosphocholine derivative with the unique amido or hydroxyl groups found in sphingomyelin. Involved in drought tolerance. This Physcomitrium patens (Spreading-leaved earth moss) protein is Bryoporin.